The primary structure comprises 388 residues: L-lactate dehydrogenase (388 aa).

Residues 1–380 (MIISSSSDYR…SRDSLVREIE (380 aa)) enclose the FMN hydroxy acid dehydrogenase domain. Y24 lines the substrate pocket. The FMN site is built by S106 and Q127. Y129 contributes to the substrate binding site. T155 lines the FMN pocket. R164 serves as a coordination point for substrate. Position 251 (K251) interacts with FMN. The active-site Proton acceptor is H275. Residue R278 coordinates substrate. 306–330 (DSGIRSGLDVVRMLAQGADGVLLGR) serves as a coordination point for FMN.

The protein belongs to the FMN-dependent alpha-hydroxy acid dehydrogenase family. FMN serves as cofactor.

Its subcellular location is the cell inner membrane. The enzyme catalyses (S)-lactate + A = pyruvate + AH2. Catalyzes the conversion of L-lactate to pyruvate. Is coupled to the respiratory chain. This Xanthobacter autotrophicus (strain ATCC BAA-1158 / Py2) protein is L-lactate dehydrogenase.